We begin with the raw amino-acid sequence, 880 residues long: Leucine--tRNA ligase (880 aa).

A 'HIGH' region motif is present at residues 46–56 (PYPSGALHMGH). The 'KMSKS' region signature appears at 638–642 (KMSKS). Lysine 641 contributes to the ATP binding site.

Belongs to the class-I aminoacyl-tRNA synthetase family.

The protein localises to the cytoplasm. It carries out the reaction tRNA(Leu) + L-leucine + ATP = L-leucyl-tRNA(Leu) + AMP + diphosphate. This Xanthomonas oryzae pv. oryzae (strain MAFF 311018) protein is Leucine--tRNA ligase.